Consider the following 224-residue polypeptide: UPF0758 protein XF_0148 (224 aa).

The MPN domain maps to 102–224 (SIHDPISAGR…PVSFAEHGWL (123 aa)). Positions 173, 175, and 186 each coordinate Zn(2+). A JAMM motif motif is present at residues 173 to 186 (HNHPSGNREPSPAD).

It belongs to the UPF0758 family.

The polypeptide is UPF0758 protein XF_0148 (Xylella fastidiosa (strain 9a5c)).